The sequence spans 245 residues: MKSIIKHILFVVLLISIIHDSQCRWFILKNRLSHFINRISELKEQDSREAKLYKSFDIDCGKNFLKVQQNSKMLVNEEEELVFKVASSLKCSSEDAAFKFYFDEIIRPKLKKGLSCFELHLQQQEPDSKLIKNAIITKAEVEKCKKQSPIDDLKEVENGLEDVIGPLDVFSCGAVTSVDDYVLFVTKSVLIKFGESSEAVKKVEMEKLKEYLKDIAFTTAECIFKRFETDPKGTWFIFVGYVARF.

The first 16 residues, 1 to 16 (MKSIIKHILFVVLLIS), serve as a signal peptide directing secretion. Ser-33, Ser-40, Ser-92, Ser-93, and Ser-115 each carry phosphoserine.

Salivary gland.

The protein localises to the secreted. Used by the larvae to construct a supramolecular structure, the larval tube. In Chironomus thummi thummi (Midge), this protein is Balbiani ring A 28 kDa protein.